A 622-amino-acid chain; its full sequence is C6 finger transcription factor fumR (622 aa).

Residues 94–123 (CDRCHGQKLRCRRENNSDTCVRCARAGVRC) constitute a DNA-binding region (zn(2)-C6 fungal-type). Disordered regions lie at residues 127 to 175 (PMRL…HSDH), 206 to 248 (ALTA…APNL), 299 to 360 (FDQA…SNSI), and 556 to 585 (PATGSASKTAASGPPAAEKRPGNGAADAGD). Composition is skewed to polar residues over residues 148-167 (PANGGSTQQLHVNQEQGPND), 217-226 (VHTSQPSGPQ), and 347-360 (RGNSQDQGEQSNSI). Low complexity predominate over residues 556–571 (PATGSASKTAASGPPA).

The protein localises to the nucleus. Functionally, transcription factor that regulates the expression of the gene clusters that mediate the biosynthesis of pseurotin and fumagillin. The sequence is that of C6 finger transcription factor fumR from Aspergillus fumigatus (strain ATCC MYA-4609 / CBS 101355 / FGSC A1100 / Af293) (Neosartorya fumigata).